A 68-amino-acid polypeptide reads, in one-letter code: Potassium channel toxin epsilon-KTx 1.2 (68 aa).

Residues 1 to 26 (MKFSCGFLLIFLVLSAMIATFSEVEA) form the signal peptide. Disulfide bonds link Cys30–Cys38, Cys33–Cys54, Cys37–Cys47, and Cys42–Cys52. Tyr55 is modified (tyrosine amide). A propeptide spanning residues 57 to 68 (RSDLNEEFENYQ) is cleaved from the precursor.

The protein belongs to the short scorpion toxin superfamily. Potassium channel inhibitor family. Epsilon-KTx 01 subfamily. In terms of tissue distribution, expressed by the venom gland.

It is found in the secreted. In terms of biological role, potassium channel blocker. At 3 uM, this toxin blocks voltage-gated potassium channels rKv1.2/KCNA2 (5%), hKv1.3/KCNA3 (10%),rKv1.4/KCNA4 (20%), Kv11/hERG (24%), and Shaker-IR (27%). The chain is Potassium channel toxin epsilon-KTx 1.2 from Tityus serrulatus (Brazilian scorpion).